Here is a 119-residue protein sequence, read N- to C-terminus: Large ribosomal subunit protein uL18 (119 aa).

The protein belongs to the universal ribosomal protein uL18 family. Part of the 50S ribosomal subunit; part of the 5S rRNA/L5/L18/L25 subcomplex. Contacts the 5S and 23S rRNAs.

Functionally, this is one of the proteins that bind and probably mediate the attachment of the 5S RNA into the large ribosomal subunit, where it forms part of the central protuberance. This is Large ribosomal subunit protein uL18 from Nitrosomonas europaea (strain ATCC 19718 / CIP 103999 / KCTC 2705 / NBRC 14298).